The following is a 63-amino-acid chain: Small ribosomal subunit protein eS17 (63 aa).

Belongs to the eukaryotic ribosomal protein eS17 family.

In Methanococcus aeolicus (strain ATCC BAA-1280 / DSM 17508 / OCM 812 / Nankai-3), this protein is Small ribosomal subunit protein eS17.